The primary structure comprises 461 residues: Cytochrome P450 monooxygenase sol6 (461 aa).

Residues 7–27 traverse the membrane as a helical segment; it reads IGWLVLSCGLFVAYWVLLAIY. Residues Asn-307 and Asn-324 are each glycosylated (N-linked (GlcNAc...) asparagine). Residue Cys-444 participates in heme binding.

The protein belongs to the cytochrome P450 family. Requires heme as cofactor.

Its subcellular location is the membrane. It participates in phytotoxin biosynthesis. Its function is as follows. Cytochrome P450 monooxygenase; part of the gene cluster that mediates the biosynthesis of the phytotoxin solanapyrone, a causal agent of early blight disease of potato and tomato. The prosolanapyrone synthase sol1 is a polyketide synthase that produces the octaketide desmethylprosolanapyrone I via sequential condensations of 7 malonyl-CoA units with one acetyl-CoA unit, and one methylation step. The octaketide backbone is further methylated by the sol2 O-methyltransferase to yield prosolanapyrone I. Prosolanapyrone I is hydroxylated to prosolanapyrone II by the cytochrome P450 monooxygenase sol6. The solanapyrone synthase sol5 then catalyzes the oxidation of prosolanapyrone II and the subsequent Diels Alder cycloisomerization of the product prosolanapyrone III to solanapyrones A and D. Solanapyrones A and D are then converted into solanapyrones B and E, respectively, by the sol3 dehydrogenase. This Alternaria solani protein is Cytochrome P450 monooxygenase sol6 (sol6).